Reading from the N-terminus, the 145-residue chain is Ribosomal RNA large subunit methyltransferase H (145 aa).

S-adenosyl-L-methionine is bound by residues Leu62, Gly94, and Leu113–Leu118.

This sequence belongs to the RNA methyltransferase RlmH family. Homodimer.

It localises to the cytoplasm. The catalysed reaction is pseudouridine(1915) in 23S rRNA + S-adenosyl-L-methionine = N(3)-methylpseudouridine(1915) in 23S rRNA + S-adenosyl-L-homocysteine + H(+). In terms of biological role, specifically methylates the pseudouridine at position 1915 (m3Psi1915) in 23S rRNA. This chain is Ribosomal RNA large subunit methyltransferase H, found in Deinococcus deserti (strain DSM 17065 / CIP 109153 / LMG 22923 / VCD115).